Here is a 128-residue protein sequence, read N- to C-terminus: Small ribosomal subunit protein uS12 (128 aa).

Residue aspartate 89 is modified to 3-methylthioaspartic acid.

This sequence belongs to the universal ribosomal protein uS12 family. As to quaternary structure, part of the 30S ribosomal subunit. Contacts proteins S8 and S17. May interact with IF1 in the 30S initiation complex.

Its function is as follows. With S4 and S5 plays an important role in translational accuracy. Interacts with and stabilizes bases of the 16S rRNA that are involved in tRNA selection in the A site and with the mRNA backbone. Located at the interface of the 30S and 50S subunits, it traverses the body of the 30S subunit contacting proteins on the other side and probably holding the rRNA structure together. The combined cluster of proteins S8, S12 and S17 appears to hold together the shoulder and platform of the 30S subunit. This chain is Small ribosomal subunit protein uS12, found in Campylobacter jejuni subsp. jejuni serotype O:6 (strain 81116 / NCTC 11828).